Here is a 423-residue protein sequence, read N- to C-terminus: Elongation factor 1-alpha (423 aa).

Residues 5–211 (KEHINLAFIG…DNLEPPEKPT (207 aa)) form the tr-type G domain. The tract at residues 14-21 (GHVDHGKS) is G1. 14–21 (GHVDHGKS) serves as a coordination point for GTP. S21 contacts Mg(2+). Residues 60–64 (GVTID) form a G2 region. Residues 81-84 (DCPG) form a G3 region. GTP-binding positions include 81–85 (DCPGH) and 136–139 (NKMD). Residues 136 to 139 (NKMD) are G4. The tract at residues 175–177 (SAF) is G5.

Belongs to the TRAFAC class translation factor GTPase superfamily. Classic translation factor GTPase family. EF-Tu/EF-1A subfamily.

The protein resides in the cytoplasm. The catalysed reaction is GTP + H2O = GDP + phosphate + H(+). GTP hydrolase that promotes the GTP-dependent binding of aminoacyl-tRNA to the A-site of ribosomes during protein biosynthesis. The sequence is that of Elongation factor 1-alpha from Methanopyrus kandleri (strain AV19 / DSM 6324 / JCM 9639 / NBRC 100938).